The primary structure comprises 609 residues: NADH-ubiquinone oxidoreductase chain 5 (609 aa).

The next 16 membrane-spanning stretches (helical) occupy residues 3–23, 46–66, 90–110, 115–135, 140–160, 174–194, 216–236, 244–264, 276–296, 304–323, 328–350, 368–388, 410–432, 460–480, 485–505, and 585–605; these read VINLFASSIITTLSMLTLPIV, AFMISMIPTTMFIYSGQEMII, MIFVPVALFVTWSIMEFSMWY, PFINRFFKYLLMFLITMMILV, LFQLFIGWEGVGIMSFLLIGW, AVLYNRIGDVGFIMAMAWFLI, LMGLLLAATGKSAQFGLHPWL, TPVSALLHSSTMVVAGVFLLI, MQTTTLCLGAITTLFTAICAL, IIAFSTSSQLGLMIVTIGIN, AFLHICTHAFFKAMLFMCSGSII, VLPFTTTSLIVGSLALTGMPF, WALLLTLVATSMTAAYSTRIMFF, LLLGSIFAGYLISYNITPTST, MPYYLKLTALTVTLLGFILAL, and GLIKLYFLSFIITLILALMMI.

The protein belongs to the complex I subunit 5 family.

The protein resides in the mitochondrion inner membrane. The catalysed reaction is a ubiquinone + NADH + 5 H(+)(in) = a ubiquinol + NAD(+) + 4 H(+)(out). In terms of biological role, core subunit of the mitochondrial membrane respiratory chain NADH dehydrogenase (Complex I) that is believed to belong to the minimal assembly required for catalysis. Complex I functions in the transfer of electrons from NADH to the respiratory chain. The immediate electron acceptor for the enzyme is believed to be ubiquinone. In Phoca vitulina (Harbor seal), this protein is NADH-ubiquinone oxidoreductase chain 5 (MT-ND5).